The following is a 108-amino-acid chain: Large ribosomal subunit protein uL23 (108 aa).

Belongs to the universal ribosomal protein uL23 family. As to quaternary structure, part of the 50S ribosomal subunit. Contacts protein L29, and trigger factor when it is bound to the ribosome.

In terms of biological role, one of the early assembly proteins it binds 23S rRNA. One of the proteins that surrounds the polypeptide exit tunnel on the outside of the ribosome. Forms the main docking site for trigger factor binding to the ribosome. This is Large ribosomal subunit protein uL23 from Mycoplasmoides gallisepticum (strain R(low / passage 15 / clone 2)) (Mycoplasma gallisepticum).